The sequence spans 171 residues: MLP-like protein 31 (171 aa).

It belongs to the MLP family.

The sequence is that of MLP-like protein 31 (MLP31) from Arabidopsis thaliana (Mouse-ear cress).